Reading from the N-terminus, the 563-residue chain is MASRSCICQVSAGIIFLIGAALLVAGLVIVLNVFPNIVNNQINDSKVLGLNADGTLNSFTDSWVNSKYISTMQYWVYDYTNTIGIMNRAIYPDVREKGPYAFDEILTMDKLNFSENGEFMEFRQIQTFVFNPNKSCAGCDPYKDKVLIPDMGFQVGIDQIDTVIEGILKNPLAATICHAIMKGKPNANQTCSNLGALIEGELGTLISLFNVSPFTTVTVDQLLFSGYKTPFVEKFLDEALGMLHFLFGTAPKPLDDPPIQLNPLNGTSDIINTVLTGKTDPLKAGYMTEFRSISNNSLFNSIGNTLPPMWWPYANKTYCKDPNSALVLTGTNGDYFKNFVKKTDILPAFVSDVCRTIHFVFDREVTVKGFKGYRFVMPPTQFDYSLDENCGYCIPLKYGSYEYPAQSACLPSGLLDISQCTGGPIIMSKPHFYQASKVVSKFVPRFKPTYDNDETMLDIEPNTGTVLQAQKRLQINMLVNQFKHIRSYSVMRPGAYPLAWVNESFYMDQNTIDQLNSQLFTPVSTVNTICWIAVGLGAGLIALSIVMVIVSFCCFRDEHHKTS.

Residues 1–13 (MASRSCICQVSAG) lie on the Cytoplasmic side of the membrane. Residues 14–34 (IIFLIGAALLVAGLVIVLNVF) form a helical membrane-spanning segment. At 35–528 (PNIVNNQIND…LFTPVSTVNT (494 aa)) the chain is on the lumenal side. Residues N43, N112, N133, N188, N265, N295, N315, and N502 are each glycosylated (N-linked (GlcNAc...) asparagine). The helical transmembrane segment at 529–549 (ICWIAVGLGAGLIALSIVMVI) threads the bilayer. Over 550–563 (VSFCCFRDEHHKTS) the chain is Cytoplasmic.

It belongs to the CD36 family.

The protein resides in the membrane. This is an uncharacterized protein from Caenorhabditis elegans.